A 448-amino-acid polypeptide reads, in one-letter code: ATP-dependent protease ATPase subunit HslU (448 aa).

ATP-binding positions include Ile-18, 60–65 (GVGKTE), Asp-261, Glu-326, and Arg-398.

It belongs to the ClpX chaperone family. HslU subfamily. A double ring-shaped homohexamer of HslV is capped on each side by a ring-shaped HslU homohexamer. The assembly of the HslU/HslV complex is dependent on binding of ATP.

It localises to the cytoplasm. Functionally, ATPase subunit of a proteasome-like degradation complex; this subunit has chaperone activity. The binding of ATP and its subsequent hydrolysis by HslU are essential for unfolding of protein substrates subsequently hydrolyzed by HslV. HslU recognizes the N-terminal part of its protein substrates and unfolds these before they are guided to HslV for hydrolysis. In Paraburkholderia phytofirmans (strain DSM 17436 / LMG 22146 / PsJN) (Burkholderia phytofirmans), this protein is ATP-dependent protease ATPase subunit HslU.